A 240-amino-acid chain; its full sequence is Insulin-like growth factor-binding protein 6 (240 aa).

The first 27 residues, 1–27, serve as a signal peptide directing secretion; sequence MTPHRLLPPLLLLLALLLAASPGGALA. The region spanning 28 to 107 is the IGFBP N-terminal domain; it reads RCPGCGQGVQ…LLGRGRCLPA (80 aa). 5 disulfides stabilise this stretch: Cys29–Cys32, Cys40–Cys44, Cys57–Cys63, Cys71–Cys84, and Cys78–Cys104. A disordered region spans residues 109–160; it reads APAVAEENPKESKPQAGTARPQDVNRRDQQRNPGTSTTPSQPNSAGVQDTEM. O-linked (HexNAc...) threonine glycosylation is present at Thr126. Residues 139–155 show a composition bias toward polar residues; that stretch reads RNPGTSTTPSQPNSAGV. A glycan (O-linked (HexNAc...) serine) is linked at Ser144. Residues Thr145 and Thr146 are each glycosylated (O-linked (HexNAc...) threonine). The O-linked (HexNAc...) serine glycan is linked to Ser152. The region spanning 160 to 234 is the Thyroglobulin type-1 domain; it reads MGPCRRHLDS…SPDGNGSSSC (75 aa). 3 cysteine pairs are disulfide-bonded: Cys163–Cys190, Cys201–Cys212, and Cys214–Cys234. The segment at 217–240 is disordered; sequence RMGKSLPGSPDGNGSSSCPTGSSG. Residues 228–240 show a composition bias toward polar residues; it reads GNGSSSCPTGSSG.

Interacts (via C-terminal domain) with PHB2. O-linked glycans consist of hexose (probably Gal), N-acetylhexosamine (probably GalNAc) and sialic acid residues. O-glycosylated with core 1 or possibly core 8 glycans. O-glycosylated on one site only in the region AA 143-168 in cerebrospinal fluid.

The protein localises to the secreted. IGF-binding proteins prolong the half-life of the IGFs and have been shown to either inhibit or stimulate the growth promoting effects of the IGFs on cell culture. They alter the interaction of IGFs with their cell surface receptors. Activates the MAPK signaling pathway and induces cell migration. The protein is Insulin-like growth factor-binding protein 6 of Homo sapiens (Human).